A 1127-amino-acid chain; its full sequence is MIAVSFKCRCQILRRLTKDESPYTKSASQTKPPDGALAVRRQSIPEEFKGSTVVELMKKEGTTLGLTVSGGIDKDGKPRVSNLRQGGIAARSDQLDVGDYIKAVNGINLAKFRHDEIISLLKNVGERVVLEVEYELPPVSVQGSSVMFRTVEVTLHKEGNTFGFVIRGGAHDDRNKSRPVVITCVRPGGPADREGTIKPGDRLLSVDGIRLLGTTHAEAMSILKQCGQEATLLIEYDVSVMDSVATASGPLLVEVAKTPGASLGVALTTSVCCNKQVIVIDKIKSASIADRCGALHVGDHILSIDGTSMEYCTLAEATQFLANTTDQVKLEILPHHQTRLALKGPDHVKIQRSDRQHPWDAWASNQCGVHTNHHHNTYHPDHCRVPALTFPKALPPNSPPAMVPSSSPTSMSAYSLSSLNMGTLPRSLYSTSPRGTMMRRRLKKKDFKSSLSLASSTVGLAGQVVHTETTEVVLTADPVTGFGIQLQGSVFATETLSSPPLISYIEADSPAERCGVLQIGDRVMAINGIPTEDSTFEEANQLLRDSSITSKVTLEIEFDVAESVIPSSGTFHVKLPKKHSVELGITISSPSSRKPGDPLVISDIKKGSVAHRTGTLELGDKLLAIDNIRLDNCSMEDAVQILQQCEDLVKLKIRKDEDNSDEQESSGAIIYTVELKRYGGPLGITISGTEEPFDPIIISSLTKGGLAERTGAIHIGDRILAINSSSLKGKPLSEAIHLLQMAGETVTLKIKKQTDAQSASSPKKFPIPGHSGDLGDGEEDPSPIQKPGKLSDAYPSTVPSVDSAVDSWDGSGIDASYGSQGSTFQTSGYNYNTYDWRSPKQRTSLSPVPKPRSQTYPDVGLSNEDWDRSTASGFVGASDSADAEQEENFWSQALEDLETCGQSGILRELEEKADRRVSLRNMTLLATIMSGSTMSLNHEAPMARSQLGRQASFQERSSSRPHYSQTTRSNTLPSDVGRKSVTLRKMKQEIKEIMSPTPVELHKVTLYKDSGMEDFGFSVADGLLEKGVYVKNIRPAGPGDVGGLKPYDRLLQVNHVRTRDFDCCLVVPLIAESGNKLDLVISRNPLASQKSIEQPALPSDWSEQNSAFFQQPSHGGNLETREPTNTL.

Residue Gln11 is the site of S-palmitoyl cysteine attachment. Ser43 bears the Phosphoserine mark. 6 PDZ domains span residues 53-136 (VVEL…EYEL), 150-238 (TVEV…EYDV), 252-336 (LVEV…LPHH), 471-560 (EVVL…EFDV), 572-657 (HVKL…RKDE), and 672-754 (TVEL…KKQT). Disordered regions lie at residues 752–802 (KQTD…PSVD), 840–865 (KQRT…SNED), and 942–980 (MARS…GRKS). Composition is skewed to polar residues over residues 840–856 (KQRT…SQTY) and 947–973 (LGRQ…NTLP). In terms of domain architecture, PDZ 7 spans 1003-1085 (KVTLYKDSGM…KLDLVISRNP (83 aa)). Residues 1108-1127 (FFQQPSHGGNLETREPTNTL) are disordered.

Interacts with EFNB3, GRIA2, GRIA3, GRIPAP1/GRASP1, PPFIA1, PPFIA4, FRAS1, PTPRF, liprins-alpha and the C-terminal tail of PRLHR. Can form homomultimers or heteromultimers with GRIP2. Interacts with EFNB1, EPHA7, EPHB2, KIF5A, KIF5B and KIF5C. Forms a ternary complex with GRIA2 and CSPG4. Interacts with ATAD1 in an ATP-dependent manner. ATAD1-catalyzed ATP hydrolysis disrupts binding to ATAD1 and to GRIA2 and leads to AMPAR complex disassembly. Interacts with SLC30A9 and PLCD4. Interacts with BUD23. Forms a complex with NSG1, GRIA2 and STX12; controls the intracellular fate of AMPAR and the endosomal sorting of the GRIA2 subunit toward recycling and membrane targeting. Interacts with NSG1. Palmitoylation of isoform 2. In terms of tissue distribution, expressed in brain. Isoform 2 is the major isoform in brain. Expressed in oligodendrocyte lineage cells.

Its subcellular location is the membrane. It is found in the cytoplasmic vesicle. The protein localises to the perikaryon. The protein resides in the cell projection. It localises to the dendrite. Its subcellular location is the cytoplasm. It is found in the endomembrane system. The protein localises to the postsynaptic cell membrane. The protein resides in the postsynaptic density. It localises to the endoplasmic reticulum membrane. May play a role as a localized scaffold for the assembly of a multiprotein signaling complex and as mediator of the trafficking of its binding partners at specific subcellular location in neurons. Through complex formation with NSG1, GRIA2 and STX12 controls the intracellular fate of AMPAR and the endosomal sorting of the GRIA2 subunit toward recycling and membrane targeting. This is Glutamate receptor-interacting protein 1 (Grip1) from Mus musculus (Mouse).